A 394-amino-acid chain; its full sequence is Hemagglutinin-esterase (394 aa).

Residues 1–16 (MARFIILFLLLAPVYS) form the signal peptide. Over 17-347 (RLCLRNHPDT…NNRVDAIPPQ (331 aa)) the chain is Extracellular. Serine 32 is a catalytic residue. Positions 119-121 (RGD) match the Cell attachment site motif. Catalysis depends on residues aspartate 261 and histidine 264. Asparagine 333 carries N-linked (GlcNAc...) asparagine; by host glycosylation. The highly polymorphic region stretch occupies residues 335-358 (TDVNNRVDAIPPQLSNIFISMGVA). Residues 348-368 (LSNIFISMGVAGFGIALFLAG) traverse the membrane as a helical segment. At 369-394 (WKACVWIAAFMYKSRGRNPPANLSVA) the chain is on the cytoplasmic side.

It is found in the host membrane. The protein resides in the virion membrane. The catalysed reaction is N-acetyl-9-O-acetylneuraminate + H2O = N-acetylneuraminate + acetate + H(+). It catalyses the reaction N-acetyl-4-O-acetylneuraminate + H2O = N-acetylneuraminate + acetate + H(+). Its function is as follows. Performs attachment to host receptor thereby inducing virus particle entry into target cell. Binds specifically to 5-N-acetyl-4-O-acetyl neuraminic acid on host cells, which plays a major role in cell tropism of the virus. ALso mediates de-O-acetylation of N-acetyl-4-O-acetylneuraminic acid. This receptor-destroying activity is important for virus release as it probably helps preventing self-aggregation and ensures the efficient spread of the progeny virus from cell to cell. The highly polymorphic region (HPR) modulates the virulence in host. Catalyzes the removal of terminal sialic acid residues from viral and cellular glycoconjugates. The protein is Hemagglutinin-esterase of Gadus morhua (Atlantic cod).